Consider the following 290-residue polypeptide: MPSCLDYAFAAAFHGTDLPGGRFWRPRACAPVFVWSEVACAVALSARIFFEARERLAAMPIGEGRPPYGRGTELYHAARRTVSSAARLWDALVALAASAAEEICVMAWGKLEPMPYLWDTRDATKIPVLGPKLMALFSAVADGATAIATEARNSLVGEAGHHHNTLPRQPPSMDMPVQARLSLMLGMEIVRCILALALPSASFNIPDDATESIEESVRIFGARLSLALAKDPIPDPVGKFEEEETYYLRCLRSIYEIENILSLAPRRQRLRDVPQTPNSPMCLPTVAPMC.

This is an uncharacterized protein from Psittacid herpesvirus 1 (isolate Amazon parrot/-/97-0001/1997) (PsHV-1).